Here is a 562-residue protein sequence, read N- to C-terminus: NAD-dependent malic enzyme (562 aa).

Tyrosine 101 acts as the Proton donor in catalysis. Arginine 154 contacts NAD(+). Lysine 172 serves as the catalytic Proton acceptor. Residues glutamate 243, aspartate 244, and aspartate 267 each coordinate a divalent metal cation. The NAD(+) site is built by aspartate 267 and asparagine 415.

Belongs to the malic enzymes family. Homotetramer. It depends on Mg(2+) as a cofactor. Requires Mn(2+) as cofactor.

It catalyses the reaction (S)-malate + NAD(+) = pyruvate + CO2 + NADH. The catalysed reaction is oxaloacetate + H(+) = pyruvate + CO2. The protein is NAD-dependent malic enzyme of Vibrio campbellii (strain ATCC BAA-1116).